The sequence spans 241 residues: Aliphatic sulfonates import ATP-binding protein SsuB (241 aa).

The 217-residue stretch at 10 to 226 (VHLHGFSRSF…RPDHPAFMQL (217 aa)) folds into the ABC transporter domain. 42–49 (GESGSGKT) serves as a coordination point for ATP.

Belongs to the ABC transporter superfamily. Aliphatic sulfonates importer (TC 3.A.1.17.2) family. The complex is composed of two ATP-binding proteins (SsuB), two transmembrane proteins (SsuC) and a solute-binding protein (SsuA).

The protein resides in the cell inner membrane. The catalysed reaction is ATP + H2O + aliphatic sulfonate-[sulfonate-binding protein]Side 1 = ADP + phosphate + aliphatic sulfonateSide 2 + [sulfonate-binding protein]Side 1.. In terms of biological role, part of the ABC transporter complex SsuABC involved in aliphatic sulfonates import. Responsible for energy coupling to the transport system. This Delftia acidovorans (Pseudomonas acidovorans) protein is Aliphatic sulfonates import ATP-binding protein SsuB.